The chain runs to 94 residues: Citrate lyase acyl carrier protein (94 aa).

O-(phosphoribosyl dephospho-coenzyme A)serine is present on Ser14.

It belongs to the CitD family. Oligomer with a subunit composition of (alpha,beta,gamma)6.

It localises to the cytoplasm. Covalent carrier of the coenzyme of citrate lyase. This is Citrate lyase acyl carrier protein from Fusobacterium nucleatum subsp. nucleatum (strain ATCC 25586 / DSM 15643 / BCRC 10681 / CIP 101130 / JCM 8532 / KCTC 2640 / LMG 13131 / VPI 4355).